A 1485-amino-acid polypeptide reads, in one-letter code: Dicer-like protein 2 (1485 aa).

Positions 1–11 are enriched in low complexity; that stretch reads MSSQDESASSS. Residues 1–61 are disordered; that stretch reads MSSQDESASS…EPQPSGNGPR (61 aa). A Helicase ATP-binding domain is found at 72-250; the sequence is MFQASMQQNI…MEDLESSLDS (179 aa). 85 to 92 lines the ATP pocket; the sequence is MDTGSGKT. The short motif at 193–196 is the DEAH box element; sequence DEAH. The 165-residue stretch at 415 to 579 folds into the Helicase C-terminal domain; sequence KLQVLLRILR…RYENDMRELD (165 aa). A Dicer dsRNA-binding fold domain is found at 609-712; that stretch reads AKGHLEHFCR…LPIRESDFVD (104 aa). RNase III domains follow at residues 988-1127 and 1168-1358; these read AQEL…IEGG and LGPL…VDSG. Mg(2+)-binding residues include E1208, D1344, and E1347. The DRBM domain occupies 1388 to 1469; the sequence is HPKEELGRVA…ALEVIRVWEE (82 aa).

This sequence belongs to the helicase family. Dicer subfamily. Mg(2+) is required as a cofactor. Requires Mn(2+) as cofactor.

Dicer-like endonuclease involved in cleaving double-stranded RNA in the RNA interference (RNAi) pathway. Produces 21 to 25 bp dsRNAs (siRNAs) which target the selective destruction of homologous RNAs leading to sequence-specific suppression of gene expression, called post-transcriptional gene silencing (PTGS). Part of a broad host defense response against viral infection and transposons. This Pyricularia oryzae (strain 70-15 / ATCC MYA-4617 / FGSC 8958) (Rice blast fungus) protein is Dicer-like protein 2 (DCL2).